Here is a 486-residue protein sequence, read N- to C-terminus: Alpha-L-arabinofuranosidase B (486 aa).

A signal peptide spans Met-1–Ala-25. N-linked (GlcNAc...) asparagine glycosylation occurs at Asn-42. Positions Leu-45–Pro-342 are catalytic. The Proton acceptor role is filled by Asp-51. Glu-229 (proton donor) is an active-site residue. Asn-302, Asn-416, and Asn-426 each carry an N-linked (GlcNAc...) asparagine glycan. The segment at Ser-359–Asn-467 is ABD.

This sequence belongs to the glycosyl hydrolase 43 family.

It localises to the secreted. It carries out the reaction Hydrolysis of terminal non-reducing alpha-L-arabinofuranoside residues in alpha-L-arabinosides.. It participates in glycan metabolism; L-arabinan degradation. Secreted arabinofuranosidase that causes degradation of rice cell wall components during infection. Required for virulence. This chain is Alpha-L-arabinofuranosidase B, found in Pyricularia oryzae (strain 70-15 / ATCC MYA-4617 / FGSC 8958) (Rice blast fungus).